The primary structure comprises 1044 residues: Outer dynein arm-docking complex subunit 2 (1044 aa).

Composition is skewed to basic and acidic residues over residues 317–338 (IKFS…EVAI) and 379–401 (SKDR…EKSR). Disordered stretches follow at residues 317 to 409 (IKFS…PGRA) and 423 to 446 (ISDS…ANAD). 5 HEAT repeats span residues 448–485 (PSEY…AQET), 487–527 (QLAI…NPQI), 530–568 (NIVD…FRRA), 627–665 (AIRK…EENY), and 668–706 (AIKA…DEET). ARM repeat units follow at residues 484–523 (ETCQ…EISH), 525–564 (PQIR…NVAK), 535–577 (GGLP…RHGG), 622–661 (YANK…ECAS), 663–702 (ENYR…QCAE), 746–785 (KENV…ECCQ), 828–867 (PESM…PCIQ), 871–910 (DAGE…NIAK), 912–951 (QENL…RCCM), 953–992 (GRNR…QLSE), and 1004–1031 (GAVK…ISNI). HEAT repeat units follow at residues 831–870 (MMII…QNAK), 874–914 (EMVR…DQEN), 916–955 (AVIT…WGRN), 958–996 (AFGE…DADN), and 999–1037 (TMHE…LALA).

Component of the outer dynein arm-docking complex along with ODAD1, ODAD3, ODAD4 and CLXN. Interacts with CFAP61. Expressed in trachea multiciliated cells.

Its subcellular location is the cytoplasm. It is found in the cytoskeleton. It localises to the cilium axoneme. The protein localises to the cilium basal body. Its function is as follows. Component of the outer dynein arm-docking complex (ODA-DC) that mediates outer dynein arms (ODA) binding onto the doublet microtubule. Involved in mediating assembly of both ODAs and their axonemal docking complex onto ciliary microtubules. The chain is Outer dynein arm-docking complex subunit 2 (ODAD2) from Bos taurus (Bovine).